Here is a 196-residue protein sequence, read N- to C-terminus: Small ribosomal subunit protein uS4c (196 aa).

Residues 89-150 form the S4 RNA-binding domain; that stretch reads MRLDNIVFRL…NQRSKRLVQN (62 aa).

Belongs to the universal ribosomal protein uS4 family. In terms of assembly, part of the 30S ribosomal subunit. Contacts protein S5. The interaction surface between S4 and S5 is involved in control of translational fidelity.

It localises to the plastid. The protein resides in the chloroplast. Functionally, one of the primary rRNA binding proteins, it binds directly to 16S rRNA where it nucleates assembly of the body of the 30S subunit. Its function is as follows. With S5 and S12 plays an important role in translational accuracy. The polypeptide is Small ribosomal subunit protein uS4c (rps4) (Eleusine indica (Goosegrass)).